Consider the following 65-residue polypeptide: Large ribosomal subunit protein bL35 (65 aa).

A disordered region spans residues 1 to 25; it reads MPKLKTKSSAAKRFKKTGKGGFKHR.

The protein belongs to the bacterial ribosomal protein bL35 family.

This chain is Large ribosomal subunit protein bL35, found in Francisella tularensis subsp. holarctica (strain FTNF002-00 / FTA).